A 245-amino-acid chain; its full sequence is tRNA (guanine-N(1)-)-methyltransferase (245 aa).

G114 contributes to the S-adenosyl-L-methionine binding site.

This sequence belongs to the RNA methyltransferase TrmD family. As to quaternary structure, homodimer.

It is found in the cytoplasm. The catalysed reaction is guanosine(37) in tRNA + S-adenosyl-L-methionine = N(1)-methylguanosine(37) in tRNA + S-adenosyl-L-homocysteine + H(+). In terms of biological role, specifically methylates guanosine-37 in various tRNAs. The sequence is that of tRNA (guanine-N(1)-)-methyltransferase from Sphingopyxis alaskensis (strain DSM 13593 / LMG 18877 / RB2256) (Sphingomonas alaskensis).